The chain runs to 289 residues: ATP synthase gamma chain (289 aa).

It belongs to the ATPase gamma chain family. F-type ATPases have 2 components, CF(1) - the catalytic core - and CF(0) - the membrane proton channel. CF(1) has five subunits: alpha(3), beta(3), gamma(1), delta(1), epsilon(1). CF(0) has three main subunits: a, b and c.

It localises to the cell inner membrane. Functionally, produces ATP from ADP in the presence of a proton gradient across the membrane. The gamma chain is believed to be important in regulating ATPase activity and the flow of protons through the CF(0) complex. The protein is ATP synthase gamma chain of Janthinobacterium sp. (strain Marseille) (Minibacterium massiliensis).